The sequence spans 264 residues: MKSVLGFKKAKVTEKISMVTCYDYTLAKIINSTDIDCILVGDSGGMVLLGKKNTTYTTLDDMQFMTQAVANGATDKFIVADLPFMSYRQSLETTMQAVMALIQSGAHAIKLEGSSGNLDIIKHIVDSGVPVMGHIGMTPQFINSFGGFKVQGRTEEAAKHLLEEAKLLEQAGCFGIVLECIPANIAKDITQNLDIPTIGIGAGSNTDGQILVLQDMLGMNTDFQPKFVKKYIDGSKLFSDAINTYVKETKANTFPTKEHCYDYC.

2 residues coordinate Mg(2+): D42 and D81. Residues 42–43 (DS), D81, and K110 contribute to the 3-methyl-2-oxobutanoate site. Residue E112 participates in Mg(2+) binding. E179 serves as the catalytic Proton acceptor.

This sequence belongs to the PanB family. As to quaternary structure, homodecamer; pentamer of dimers. It depends on Mg(2+) as a cofactor.

It is found in the cytoplasm. The catalysed reaction is 3-methyl-2-oxobutanoate + (6R)-5,10-methylene-5,6,7,8-tetrahydrofolate + H2O = 2-dehydropantoate + (6S)-5,6,7,8-tetrahydrofolate. Its pathway is cofactor biosynthesis; (R)-pantothenate biosynthesis; (R)-pantoate from 3-methyl-2-oxobutanoate: step 1/2. Functionally, catalyzes the reversible reaction in which hydroxymethyl group from 5,10-methylenetetrahydrofolate is transferred onto alpha-ketoisovalerate to form ketopantoate. This Francisella tularensis subsp. tularensis (strain FSC 198) protein is 3-methyl-2-oxobutanoate hydroxymethyltransferase.